Here is a 193-residue protein sequence, read N- to C-terminus: MAMALALGGGQDAERKVKVAEVALRALLCGLGALAAALVATDTQTRTFFSLQKKASYTDMKAMVFLVDAAAVAAGYSLLQLAARCCGGGAMSSGRGDGGGRGRALSWCVFSCDQALAYVLLAAVAAALQASVVAKRGQPELQWMGICALYGAFCRQAGAGLATAVVAGLAAVLLAFLSAFNLFRLYGSGGTKS.

At Met-1–Lys-18 the chain is on the cytoplasmic side. The chain crosses the membrane as a helical span at residues Val-19–Val-39. Residues Ala-40–Lys-61 lie on the Extracellular side of the membrane. Residues Ala-62–Ala-82 traverse the membrane as a helical segment. The Cytoplasmic segment spans residues Ala-83–Asp-113. A helical membrane pass occupies residues Gln-114–Ala-134. Over Lys-135 to Gln-156 the chain is Extracellular. Residues Ala-157 to Leu-177 traverse the membrane as a helical segment. Residues Ser-178–Ser-193 lie on the Cytoplasmic side of the membrane.

Belongs to the Casparian strip membrane proteins (CASP) family. In terms of assembly, homodimer and heterodimers.

It is found in the cell membrane. In Sorghum bicolor (Sorghum), this protein is CASP-like protein 2U1.